Reading from the N-terminus, the 137-residue chain is Basic phospholipase A2 beta-bungarotoxin A1 chain (137 aa).

The N-terminal stretch at 1 to 9 is a signal peptide; the sequence is AVCVSLLGA. The propeptide occupies 10–17; sequence ANIPPHPL. 6 disulfides stabilise this stretch: Cys-44-Cys-136, Cys-46-Cys-62, Cys-61-Cys-117, Cys-68-Cys-110, Cys-78-Cys-103, and Cys-96-Cys-108. 3 residues coordinate Ca(2+): Tyr-45, Gly-47, and Gly-49. Residue His-65 is part of the active site. Residue Asp-66 participates in Ca(2+) binding. Residue Asp-111 is part of the active site.

This sequence belongs to the phospholipase A2 family. Group I subfamily. D49 sub-subfamily. As to quaternary structure, heterodimer; disulfide-linked. The A chain has phospholipase A2 activity and the B chain shows homology with the basic protease inhibitors. Ca(2+) serves as cofactor. Expressed by the venom gland.

Its subcellular location is the secreted. The enzyme catalyses a 1,2-diacyl-sn-glycero-3-phosphocholine + H2O = a 1-acyl-sn-glycero-3-phosphocholine + a fatty acid + H(+). In terms of biological role, snake venom phospholipase A2 (PLA2) that shows presynaptic neurotoxicity. The A chain has phospholipase activity. PLA2 catalyzes the calcium-dependent hydrolysis of the 2-acyl groups in 3-sn-phosphoglycerides. In Bungarus candidus (Malayan krait), this protein is Basic phospholipase A2 beta-bungarotoxin A1 chain.